The sequence spans 393 residues: Serine/threonine protein kinase AFUB_078980 (393 aa).

The Protein kinase domain maps to 61-390 (YQVLSKLGFG…APELLTDPWL (330 aa)). ATP-binding positions include 67 to 75 (LGFGANSTV) and K90. D190 functions as the Proton acceptor in the catalytic mechanism.

It belongs to the protein kinase superfamily. CMGC Ser/Thr protein kinase family.

The catalysed reaction is L-seryl-[protein] + ATP = O-phospho-L-seryl-[protein] + ADP + H(+). It catalyses the reaction L-threonyl-[protein] + ATP = O-phospho-L-threonyl-[protein] + ADP + H(+). Serine/threonine protein kinase; part of the subtelomeric hrmA-associated cluster (HAC) containing genes that alter the hyphal surface (such as reduced total chitin or increased beta-glucan exposure) and perturb inter-hyphal interactions within the developing biofilms, resulting in a loss of vertically aligned polarized growing filaments. Consequently, this hypoxia-typic morphotype (called H-MORPH) with altered biofilm architecture leads to increased hypoxia fitness, increased host inflammation, rapid disease progression, and mortality in a murine model of invasive aspergillosis. The sequence is that of Serine/threonine protein kinase AFUB_078980 from Aspergillus fumigatus (strain CBS 144.89 / FGSC A1163 / CEA10) (Neosartorya fumigata).